Reading from the N-terminus, the 387-residue chain is Leucine aminopeptidase 1 (387 aa).

An N-terminal signal peptide occupies residues 1–18 (MKFTNLSLLALSASLASA). A propeptide spanning residues 19 to 86 (RFVEQHETDQ…LGTLRTSSVK (68 aa)) is cleaved from the precursor. N-linked (GlcNAc...) asparagine glycosylation occurs at asparagine 179. Positions 187, 206, 245, and 272 each coordinate Zn(2+). Residues cysteine 321 and cysteine 325 are joined by a disulfide bond. Histidine 354 is a Zn(2+) binding site.

Belongs to the peptidase M28 family. M28E subfamily. As to quaternary structure, monomer. Requires Zn(2+) as cofactor.

Its subcellular location is the secreted. Extracellular aminopeptidase that allows assimilation of proteinaceous substrates. This is Leucine aminopeptidase 1 (lap1) from Sclerotinia sclerotiorum (strain ATCC 18683 / 1980 / Ss-1) (White mold).